Here is a 298-residue protein sequence, read N- to C-terminus: Putative S-adenosyl-L-methionine-dependent methyltransferase MSMEG_1480/MSMEI_1444 (298 aa).

Residues Asp-127 and 156–157 (DL) each bind S-adenosyl-L-methionine.

This sequence belongs to the UPF0677 family.

In terms of biological role, exhibits S-adenosyl-L-methionine-dependent methyltransferase activity. This Mycolicibacterium smegmatis (strain ATCC 700084 / mc(2)155) (Mycobacterium smegmatis) protein is Putative S-adenosyl-L-methionine-dependent methyltransferase MSMEG_1480/MSMEI_1444.